The primary structure comprises 212 residues: Peptide methionine sulfoxide reductase MsrA (212 aa).

Cysteine 52 is a catalytic residue.

The protein belongs to the MsrA Met sulfoxide reductase family.

The catalysed reaction is L-methionyl-[protein] + [thioredoxin]-disulfide + H2O = L-methionyl-(S)-S-oxide-[protein] + [thioredoxin]-dithiol. The enzyme catalyses [thioredoxin]-disulfide + L-methionine + H2O = L-methionine (S)-S-oxide + [thioredoxin]-dithiol. Has an important function as a repair enzyme for proteins that have been inactivated by oxidation. Catalyzes the reversible oxidation-reduction of methionine sulfoxide in proteins to methionine. In Escherichia coli (strain SMS-3-5 / SECEC), this protein is Peptide methionine sulfoxide reductase MsrA.